Consider the following 369-residue polypeptide: MRKRYDTIVIGGGIIGTSIAYHLAKAGKKTAVFESGEVGKKATSAAAGMLGAHAECDKPGTFFEFARASQKAYKRLTGELKDISGIDIRRHDGGILKLAFSESDREHLMQMGALDSVEWLEADEVYKLEPNAGKGILGANFIRDDVHVEPAAVCRAFARGARMLGADVFEYTPVLSIESEAGAVRVTSASGTAEAEHAVIASGVWSGALFKQIGLDKRFYPVKGECLSVWNDGISLTRTLYHDHCYIVPRHSGRLVVGATMKPGDWNEQPELGGIEELIRKAKSMLPGIESMKIDQCWAGLRPETGDGNPYIGRHPENDRILFAAGHFRNGILLAPATGEMMADMILGNPVKTEWIEAFKAERKEAVHR.

Residues 14–15, 34–35, 42–43, 47–49, and V174 each bind FAD; these read II, ES, AT, and AGM. Positions 302 and 329 each coordinate substrate. 327–333 provides a ligand contact to FAD; it reads HFRNGIL.

Belongs to the DAO family. ThiO subfamily. Homotetramer. The cofactor is FAD.

The catalysed reaction is glycine + O2 + H2O = glyoxylate + H2O2 + NH4(+). It carries out the reaction glyphosate + O2 + H2O = aminomethylphosphonate + glyoxylate + H2O2 + H(+). The enzyme catalyses N-ethylglycine + O2 + H2O = ethylamine + glyoxylate + H2O2. It catalyses the reaction sarcosine + O2 + H2O = methylamine + glyoxylate + H2O2. The catalysed reaction is D-alanine + O2 + H2O = pyruvate + H2O2 + NH4(+). Its pathway is cofactor biosynthesis; thiamine diphosphate biosynthesis. Functionally, catalyzes the FAD-dependent oxidative deamination of glycine, leading to glyoxylate, ammonia and hydrogen peroxide. Is also able to act on various amines and D-amino acids to yield the corresponding alpha-keto acids, ammonia/amine, and hydrogen peroxide. Can also oxidize the herbicide glyphosate (N-phosphonomethylglycine), and thus may be involved in the degradation pathway that allows B.licheniformis J33-8 to grow with glyphosate as the sole source of carbon. Is essential for thiamine biosynthesis since the oxidation of glycine catalyzed by ThiO generates the glycine imine intermediate (dehydroglycine) required for the biosynthesis of the thiazole ring of thiamine pyrophosphate. The polypeptide is Glycine oxidase (Bacillus licheniformis).